The following is a 671-amino-acid chain: Condensin complex subunit 2 (671 aa).

Polar residues predominate over residues 1-24; it reads MDESLTPNPKQKPASTTTRIQAPT. Disordered stretches follow at residues 1–33, 404–444, and 510–564; these read MDES…GSND, NSWA…KQAE, and RRKN…ISQP. The short motif at 406–415 is the Kleisin-gamma middle domain (GM domain) involved in chromosome-binding element; it reads WAGPDHWKYR. A compositionally biased stretch (acidic residues) spans 536 to 556; that stretch reads VYDDDDGPFDDNENDQSDAED.

Belongs to the CND2 (condensin subunit 2) family. Component of the condensin complex. Mostly expressed in flower buds and flowers, and, to a lower extent, in roots, stems, leaves and seedlings.

It is found in the cytoplasm. The protein localises to the chromosome. Regulatory subunit of the condensin complex, a complex required for conversion of interphase chromatin into mitotic-like condense chromosomes. The condensin complex probably introduces positive supercoils into relaxed DNA in the presence of type I topoisomerases and converts nicked DNA into positive knotted forms in the presence of type II topoisomerases. Essential protein. The polypeptide is Condensin complex subunit 2 (CAPH) (Arabidopsis thaliana (Mouse-ear cress)).